Consider the following 524-residue polypeptide: Bifunctional purine biosynthesis protein PurH (524 aa).

The 145-residue stretch at 1 to 145 folds into the MGS-like domain; it reads MIKQALLSVS…KNHRDVTVIV (145 aa).

This sequence belongs to the PurH family.

It carries out the reaction (6R)-10-formyltetrahydrofolate + 5-amino-1-(5-phospho-beta-D-ribosyl)imidazole-4-carboxamide = 5-formamido-1-(5-phospho-D-ribosyl)imidazole-4-carboxamide + (6S)-5,6,7,8-tetrahydrofolate. The enzyme catalyses IMP + H2O = 5-formamido-1-(5-phospho-D-ribosyl)imidazole-4-carboxamide. It participates in purine metabolism; IMP biosynthesis via de novo pathway; 5-formamido-1-(5-phospho-D-ribosyl)imidazole-4-carboxamide from 5-amino-1-(5-phospho-D-ribosyl)imidazole-4-carboxamide (10-formyl THF route): step 1/1. It functions in the pathway purine metabolism; IMP biosynthesis via de novo pathway; IMP from 5-formamido-1-(5-phospho-D-ribosyl)imidazole-4-carboxamide: step 1/1. This chain is Bifunctional purine biosynthesis protein PurH, found in Cupriavidus metallidurans (strain ATCC 43123 / DSM 2839 / NBRC 102507 / CH34) (Ralstonia metallidurans).